The sequence spans 215 residues: MGREFLDLFEQWAESYDQSVEGYDEQYRDVFAGYDRILSTVADKAGQVVLEFGIGTGNLTKKLLERGKTVYGIEPSAPMRKKAAEKLGERAVIMDGDFLQFPLPPEPIDTIASTYAFHHLTDAEKDEAIAKYSQLLHSGGKIVFADTAFRDKEAFRQTVEAARARGFHDLADDLEREYYTTLDVLASLFANHGFSVSFAQQNAFVWVMEAVKQTT.

Residues G53, E74, and D97 each coordinate S-adenosyl-L-methionine.

The protein belongs to the methyltransferase superfamily. YrrT family.

Functionally, could be a S-adenosyl-L-methionine-dependent methyltransferase. This is an uncharacterized protein from Geobacillus thermodenitrificans (strain NG80-2).